A 224-amino-acid polypeptide reads, in one-letter code: Cytochrome c biogenesis ATP-binding export protein CcmA (224 aa).

One can recognise an ABC transporter domain in the interval 1–220; that stretch reads MQNAEAAPAL…EYAHAEVVGA (220 aa). 40-47 serves as a coordination point for ATP; the sequence is GANGSGKT.

It belongs to the ABC transporter superfamily. CcmA exporter (TC 3.A.1.107) family. As to quaternary structure, the complex is composed of two ATP-binding proteins (CcmA) and two transmembrane proteins (CcmB).

It is found in the cell inner membrane. The enzyme catalyses heme b(in) + ATP + H2O = heme b(out) + ADP + phosphate + H(+). In terms of biological role, part of the ABC transporter complex CcmAB involved in the biogenesis of c-type cytochromes; once thought to export heme, this seems not to be the case, but its exact role is uncertain. Responsible for energy coupling to the transport system. In Bordetella parapertussis (strain 12822 / ATCC BAA-587 / NCTC 13253), this protein is Cytochrome c biogenesis ATP-binding export protein CcmA.